The chain runs to 105 residues: Endogenous retrovirus group K member 8 Rec protein (105 aa).

A disordered region spans residues 1–48; that stretch reads MNPSEMQRKAPPRRRRHRNRAPLTHKMNKMVTSEEQMKLPSTKKAEPP. Positions 10-20 are enriched in basic residues; that stretch reads APPRRRRHRNR. A Nuclear localization signal motif is present at residues 13–20; sequence RRRRHRNR. Residues 50–59 carry the Nuclear export signal motif; that stretch reads WAQLKKLTQL.

Forms homodimers, homotrimers, and homotetramers via a C-terminal domain. Associates with XPO1 and with ZNF145.

It localises to the cytoplasm. It is found in the nucleus. The protein localises to the nucleolus. Retroviral replication requires the nuclear export and translation of unspliced, singly-spliced and multiply-spliced derivatives of the initial genomic transcript. Rec interacts with a highly structured RNA element (RcRE) present in the viral 3'LTR and recruits the cellular nuclear export machinery. This permits export to the cytoplasm of unspliced genomic or incompletely spliced subgenomic viral transcripts. The chain is Endogenous retrovirus group K member 8 Rec protein (ERVK-8) from Homo sapiens (Human).